The chain runs to 198 residues: Large ribosomal subunit protein bL25 (198 aa).

The protein belongs to the bacterial ribosomal protein bL25 family. CTC subfamily. In terms of assembly, part of the 50S ribosomal subunit; part of the 5S rRNA/L5/L18/L25 subcomplex. Contacts the 5S rRNA. Binds to the 5S rRNA independently of L5 and L18.

Functionally, this is one of the proteins that binds to the 5S RNA in the ribosome where it forms part of the central protuberance. The polypeptide is Large ribosomal subunit protein bL25 (Lysinibacillus sphaericus (strain C3-41)).